The primary structure comprises 86 residues: Co-chaperonin GroES (86 aa).

Belongs to the GroES chaperonin family. As to quaternary structure, heptamer of 7 subunits arranged in a ring. Interacts with the chaperonin GroEL.

It is found in the cytoplasm. Together with the chaperonin GroEL, plays an essential role in assisting protein folding. The GroEL-GroES system forms a nano-cage that allows encapsulation of the non-native substrate proteins and provides a physical environment optimized to promote and accelerate protein folding. GroES binds to the apical surface of the GroEL ring, thereby capping the opening of the GroEL channel. The sequence is that of Co-chaperonin GroES from Campylobacter jejuni subsp. jejuni serotype O:6 (strain 81116 / NCTC 11828).